A 389-amino-acid polypeptide reads, in one-letter code: S-adenosylmethionine synthase (389 aa).

H17 serves as a coordination point for ATP. D19 lines the Mg(2+) pocket. E45 provides a ligand contact to K(+). E58 and Q102 together coordinate L-methionine. The segment at 102–112 (QSADIAQGVDA) is flexible loop. ATP contacts are provided by residues 167–169 (DAK), D241, 247–248 (RK), A264, and K268. D241 provides a ligand contact to L-methionine. K272 is an L-methionine binding site.

It belongs to the AdoMet synthase family. Homotetramer; dimer of dimers. Requires Mg(2+) as cofactor. The cofactor is K(+).

Its subcellular location is the cytoplasm. It catalyses the reaction L-methionine + ATP + H2O = S-adenosyl-L-methionine + phosphate + diphosphate. It participates in amino-acid biosynthesis; S-adenosyl-L-methionine biosynthesis; S-adenosyl-L-methionine from L-methionine: step 1/1. Functionally, catalyzes the formation of S-adenosylmethionine (AdoMet) from methionine and ATP. The overall synthetic reaction is composed of two sequential steps, AdoMet formation and the subsequent tripolyphosphate hydrolysis which occurs prior to release of AdoMet from the enzyme. This chain is S-adenosylmethionine synthase, found in Parvibaculum lavamentivorans (strain DS-1 / DSM 13023 / NCIMB 13966).